A 79-amino-acid polypeptide reads, in one-letter code: Small ribosomal subunit protein uS17 (79 aa).

This sequence belongs to the universal ribosomal protein uS17 family. As to quaternary structure, part of the 30S ribosomal subunit.

Functionally, one of the primary rRNA binding proteins, it binds specifically to the 5'-end of 16S ribosomal RNA. This is Small ribosomal subunit protein uS17 from Rhizobium etli (strain CIAT 652).